Reading from the N-terminus, the 195-residue chain is Ribonuclease HII (195 aa).

Residues 1-195 (MICGIDEAGR…SWRTLRYLNT (195 aa)) enclose the RNase H type-2 domain. A divalent metal cation-binding residues include D6, E7, and D101.

The protein belongs to the RNase HII family. It depends on Mn(2+) as a cofactor. Mg(2+) is required as a cofactor.

The protein localises to the cytoplasm. It catalyses the reaction Endonucleolytic cleavage to 5'-phosphomonoester.. Functionally, endonuclease that specifically degrades the RNA of RNA-DNA hybrids. The chain is Ribonuclease HII from Pyrobaculum islandicum (strain DSM 4184 / JCM 9189 / GEO3).